The primary structure comprises 576 residues: Boron transporter 1 (576 aa).

The Cytoplasmic portion of the chain corresponds to 1–84; it reads MSNESTRVTV…SDWVDAFNYR (84 aa). Positions 19–48 are disordered; sequence ECAQALERTNDELDRESSVSESRSDEESHE. The segment covering 26–48 has biased composition (basic and acidic residues); that stretch reads RTNDELDRESSVSESRSDEESHE. A helical membrane pass occupies residues 85 to 105; it reads VIPSIVDTYFNNLLPAIAFAQ. The Extracellular segment spans residues 106 to 116; that stretch reads DMFDRTDNSYG. A helical membrane pass occupies residues 117–134; that stretch reads VNEVLLSSAMAGIVFGVL. Residues 135–140 are Cytoplasmic-facing; sequence GGQPLC. The helical transmembrane segment at 141-160 threads the bilayer; the sequence is IVGVTGPISIFNYTVYEIIK. Residues 161–165 lie on the Extracellular side of the membrane; the sequence is PLNTS. The chain crosses the membrane as a helical span at residues 166–186; the sequence is YFGFMFWICMWSMIFHLVLAF. Over 187-192 the chain is Cytoplasmic; that stretch reads TNAVCL. A helical membrane pass occupies residues 193–213; the sequence is LQYVTTFPCDIFGLFINVVYI. Over 214 to 235 the chain is Extracellular; the sequence is QKGIQILTRQFSAKSGEKSVQD. A helical membrane pass occupies residues 236-256; sequence GFASVVVALVMTAFGLFFKLF. Over 257–274 the chain is Cytoplasmic; that stretch reads HYYPLFSHRIRTFISDYS. The helical transmembrane segment at 275-295 threads the bilayer; that stretch reads TALSVLFWSSFTHFGGYLHDV. Residues 296 to 329 are Extracellular-facing; the sequence is KFKKLPITKAFFPTSKVNRPQNTWLAYEPIPVKD. A helical transmembrane segment spans residues 330-350; the sequence is VFIALPFGIFLTILFYFDHNV. Residues 351 to 373 lie on the Cytoplasmic side of the membrane; that stretch reads SSLMAQRHQYKLKKPSSFHYDFA. The chain crosses the membrane as a helical span at residues 374–394; it reads LLGLTTCISGVLGIPAPNGLI. Residues 395–438 lie on the Extracellular side of the membrane; it reads PQAPLHTETLLVRDSNQKVISCVEQRFTNTFQGLMILGTMTRPL. The chain crosses the membrane as a helical span at residues 439–459; that stretch reads LVCLGEIPQAVLSGLFFIMGI. Over 460–495 the chain is Cytoplasmic; sequence NGLMTNSIIQRLVFLFSDPNRRDNTSPLMKVSKKSM. A helical membrane pass occupies residues 496–516; it reads LIFLSFSLTGFAGEFAITNTI. At 517–518 the chain is on the extracellular side; that stretch reads AA. The helical transmembrane segment at 519–539 threads the bilayer; the sequence is IGFPLVLLLSVLVSFSFAYIF. The Cytoplasmic segment spans residues 540–576; the sequence is PTEELKILDTNVAQKFTIKNLLLENIRDAKFCDKHED.

This sequence belongs to the anion exchanger (TC 2.A.31) family.

Its subcellular location is the cell membrane. The protein localises to the vacuole membrane. Functions in boric acid/borate export across the plasma membrane, and thereby protects yeast cells from boron toxicity. Involved in the trafficking of proteins to the vacuole. This chain is Boron transporter 1 (BOR1), found in Saccharomyces cerevisiae (strain ATCC 204508 / S288c) (Baker's yeast).